We begin with the raw amino-acid sequence, 165 residues long: Minor capsid protein VP2 (165 aa).

Belongs to the sapovirus VP2 family. As to quaternary structure, homooligomer. The portal-like structure consists in 12 copies of VP2. Interacts with capsid protein VP1.

It localises to the virion. Its subcellular location is the host cytoplasm. Minor structural protein that forms a portal-like structure at a unique three-fold axis of symmetry, following binding to the host receptor. The channel formed by VP2 may allow the delivery of the viral genome through the host endosomal membrane. This Homo sapiens (Human) protein is Minor capsid protein VP2.